The primary structure comprises 221 residues: Ribosomal RNA large subunit methyltransferase E (221 aa).

Glycine 60, tryptophan 62, aspartate 89, aspartate 105, and aspartate 134 together coordinate S-adenosyl-L-methionine. Residue lysine 174 is the Proton acceptor of the active site. The segment at 199 to 221 is disordered; the sequence is KPKASRDKSSETFLLGRQLKHPG.

It belongs to the class I-like SAM-binding methyltransferase superfamily. RNA methyltransferase RlmE family.

The protein localises to the cytoplasm. It catalyses the reaction uridine(2552) in 23S rRNA + S-adenosyl-L-methionine = 2'-O-methyluridine(2552) in 23S rRNA + S-adenosyl-L-homocysteine + H(+). Functionally, specifically methylates the uridine in position 2552 of 23S rRNA at the 2'-O position of the ribose in the fully assembled 50S ribosomal subunit. This Ralstonia nicotianae (strain ATCC BAA-1114 / GMI1000) (Ralstonia solanacearum) protein is Ribosomal RNA large subunit methyltransferase E.